Consider the following 127-residue polypeptide: MFRTMMNGKIHRATVTEANLNYVGSITIDSAILEAVDMLPNEKVQIVNNNNGARIETYIIPGEPGSGVICLNGAAARHVQVGDVVIIMSYGMFTTEEAKTHEPKIVVLDEKNHIEMILPEEKAHTTL.

The active-site Schiff-base intermediate with substrate; via pyruvic acid is the Ser-25. Ser-25 carries the pyruvic acid (Ser) modification. Thr-57 is a substrate binding site. The Proton donor role is filled by Tyr-58. 73–75 (GAA) is a substrate binding site.

The protein belongs to the PanD family. As to quaternary structure, heterooctamer of four alpha and four beta subunits. Requires pyruvate as cofactor. Post-translationally, is synthesized initially as an inactive proenzyme, which is activated by self-cleavage at a specific serine bond to produce a beta-subunit with a hydroxyl group at its C-terminus and an alpha-subunit with a pyruvoyl group at its N-terminus.

The protein localises to the cytoplasm. The catalysed reaction is L-aspartate + H(+) = beta-alanine + CO2. It participates in cofactor biosynthesis; (R)-pantothenate biosynthesis; beta-alanine from L-aspartate: step 1/1. Catalyzes the pyruvoyl-dependent decarboxylation of aspartate to produce beta-alanine. The protein is Aspartate 1-decarboxylase of Listeria monocytogenes serotype 4b (strain CLIP80459).